Reading from the N-terminus, the 303-residue chain is HTH-type transcriptional regulator CatM (303 aa).

Residues 1–58 enclose the HTH lysR-type domain; that stretch reads MELRHLRYFVTVVEEQSISKAAEKLCIAQPPLSRQIQKLEEELGIQLFERGFRPAKVT. The segment at residues 18 to 37 is a DNA-binding region (H-T-H motif); that stretch reads ISKAAEKLCIAQPPLSRQIQ. 2 residues coordinate cis,cis-muconate: serine 99 and threonine 128.

It belongs to the LysR transcriptional regulatory family. Homotetramer in solution.

Positively regulates the expression of catA, catBCIJFD and benPK in response to cis,cis-muconate. It binds to the catB-catM intercistronic region, to a specific sequence upstream of catA and to the benPK promoter region. Can also repress pca genes. The sequence is that of HTH-type transcriptional regulator CatM (catM) from Acinetobacter baylyi (strain ATCC 33305 / BD413 / ADP1).